We begin with the raw amino-acid sequence, 600 residues long: Elongation factor 4 (600 aa).

Residues Lys-5–Glu-187 enclose the tr-type G domain. Residues Asp-17–Thr-22 and Asn-134–Asp-137 each bind GTP.

It belongs to the TRAFAC class translation factor GTPase superfamily. Classic translation factor GTPase family. LepA subfamily.

It localises to the cell membrane. It catalyses the reaction GTP + H2O = GDP + phosphate + H(+). Required for accurate and efficient protein synthesis under certain stress conditions. May act as a fidelity factor of the translation reaction, by catalyzing a one-codon backward translocation of tRNAs on improperly translocated ribosomes. Back-translocation proceeds from a post-translocation (POST) complex to a pre-translocation (PRE) complex, thus giving elongation factor G a second chance to translocate the tRNAs correctly. Binds to ribosomes in a GTP-dependent manner. The protein is Elongation factor 4 of Clostridium perfringens (strain ATCC 13124 / DSM 756 / JCM 1290 / NCIMB 6125 / NCTC 8237 / Type A).